Consider the following 303-residue polypeptide: Carboxypeptidase B (303 aa).

The Peptidase M14 domain maps to 5–298 (SYHDYDEINA…EGVKVVANFV (294 aa)). Histidine 63 and glutamate 66 together coordinate Zn(2+). Substrate-binding positions include 63 to 66 (HARE), arginine 118, and 136 to 137 (NR). Histidine 189 is a Zn(2+) binding site. Substrate is bound by residues 190-191 (SY) and tyrosine 241. Glutamate 264 functions as the Proton donor/acceptor in the catalytic mechanism.

It belongs to the peptidase M14 family. Zn(2+) is required as a cofactor.

Its subcellular location is the secreted. It carries out the reaction Preferential release of a C-terminal lysine or arginine amino acid.. This Astacus astacus (Noble crayfish) protein is Carboxypeptidase B.